The chain runs to 393 residues: MATAALRQIWIPRFLPVPWFLCGSRRYASSSFKAADLQLEMTQEPHKKPDPSQPLLFGKTFTDHMLMVEWNQEKGWGQPRIQPFQNLTLHPACSALHYSLQLFEGMKAFKGGDQRVRLFRPWLNMERMLRSALRLCLPSFDKIELLECIRRLVEVDQDWVPGSMGTSLYVRPVLIGNEPSLGVGHPTRALLFVILSPVGAYFPGDALKPVSLLADPSFIRAWVGGVGNYKLGGNYGPTVLVQQEAQKKGCEQVLWLYGPDHELTEVGTMNIFVFWTYEDGVLELVTPPLDGIILPGIVRQSLLDLARTWGEFRVVERKITMKEFLRALKDGRVREVFGSGTACQVCPVHQILYQGKHFHIPTMENGPQLILRFHKELKAIQYGSKAHEWMLPV.

The transit peptide at methionine 1–tyrosine 27 directs the protein to the mitochondrion. Tyrosine 169 is a substrate binding site. Lysine 230 carries the N6-(pyridoxal phosphate)lysine modification. Lysine 322 is subject to N6-acetyllysine.

This sequence belongs to the class-IV pyridoxal-phosphate-dependent aminotransferase family. In terms of assembly, homodimer. It depends on pyridoxal 5'-phosphate as a cofactor.

The protein resides in the mitochondrion. The catalysed reaction is L-leucine + 2-oxoglutarate = 4-methyl-2-oxopentanoate + L-glutamate. It carries out the reaction L-isoleucine + 2-oxoglutarate = (S)-3-methyl-2-oxopentanoate + L-glutamate. The enzyme catalyses L-valine + 2-oxoglutarate = 3-methyl-2-oxobutanoate + L-glutamate. In terms of biological role, catalyzes the first reaction in the catabolism of the essential branched chain amino acids leucine, isoleucine, and valine. May also function as a transporter of branched chain alpha-keto acids. This chain is Branched-chain-amino-acid aminotransferase, mitochondrial (BCAT2), found in Bos taurus (Bovine).